The following is a 422-amino-acid chain: Inner membrane ALBINO3-like protein 2, chloroplastic (422 aa).

The span at 1-10 (MALQMKQSPS) shows a compositional bias: polar residues. Residues 1 to 22 (MALQMKQSPSMGVRRASQPVLP) are disordered. A helical membrane pass occupies residues 65–85 (LYTLAEGGPIDVLAQFFEFVL). The Stromal segment spans residues 86-96 (QTLDEGLESAK). Residues 97–117 (IPYSYGFAIIALTVLVKVATF) traverse the membrane as a helical segment. The Lumenal segment spans residues 118 to 166 (PLTQKQVESTLSLQALQPRVKELQAKYADDPENLQLETARLYKEAGVNP). Residues 167–187 (LAGCFPTLATIPVFIGLYNAL) traverse the membrane as a helical segment. The Stromal portion of the chain corresponds to 188–225 (SNAAKEGLLTEGFFWIPSLGGPTTIGGGLEWLVPFENG). A helical membrane pass occupies residues 226–246 (APPVGWANAAAYLVMPVLLVA). Over 247 to 275 (SQYASQKIISSQNNQDPSQQQAQAILKFL) the chain is Lumenal. The chain crosses the membrane as a helical span at residues 276–296 (PLMIGWFSLNVPSGLTLYWFV). Residues 297–422 (NNLLSTGQQL…GSEEGKDNSA (126 aa)) are Stromal-facing. The tract at residues 325 to 422 (TAGSSTPIVK…GSEEGKDNSA (98 aa)) is disordered. A compositionally biased stretch (basic and acidic residues) spans 334-350 (KPKEERVKKVTGKELGS). A compositionally biased stretch (acidic residues) spans 358 to 367 (DGEEVEDVEV). A compositionally biased stretch (low complexity) spans 368–380 (EVVSSGSSSSSGS). Residues 386-400 (RKGEKFRALKAREAA) are compositionally biased toward basic and acidic residues.

The protein belongs to the OXA1/ALB3/YidC (TC 2.A.9.2) family.

It is found in the plastid. The protein localises to the chloroplast thylakoid membrane. Functionally, required for the insertion of some light-harvesting complexes (LHC) proteins into the chloroplast thylakoid membrane. Essential for the assembly and activity of LHC I and II. Its function is probably partly distinct from that of ALB3.1. In Chlamydomonas reinhardtii (Chlamydomonas smithii), this protein is Inner membrane ALBINO3-like protein 2, chloroplastic (ALB3.2).